The following is a 276-amino-acid chain: MAAGFKTVEPLEYYRRFLKENCRPDGRELGEFRATTVNIGSISTADGSALVKLGNTTVICGVKAEFAAPPVDAPDRGYVVPNVDLPPLCSSRFRTGPPGEEAQVTSQFIADVVDNSQVIKKEDLCISPGKLAWVLYCDLICLDYDGNILDACTFALLAALKNVQLPEVTINEETALAEVNLKKKSYLNVRTNPVATSFAVFDDTLLIVDPTGEEEHLSTGTLTVVTDEDGKLCCLHKPGGSGLTGAKLQDCMSRAVTRHKEVSKLLDEVIQSMRHK.

Ala2 is subject to N-acetylalanine.

The protein belongs to the RNase PH family. Component of the RNA exosome core complex (Exo-9), composed of EXOSC1, EXOSC2, EXOSC3, EXOSC4, EXOSC5, EXOSC6, EXOSC7, EXOSC8 and EXOSC9; within the complex interacts with EXOSC5 and EXOSC6. The catalytically inactive RNA exosome core complex (Exo-9) associates with the catalytic subunit EXOSC10/RRP6. Exo-9 may associate with DIS3 to form the nucleolar exosome complex, or DIS3L to form the cytoplasmic exosome complex. Exo-9 is formed by a hexameric base ring consisting of the heterodimers EXOSC4-EXOSC9, EXOSC5-EXOSC8 and EXOSC6-EXOSC7, and a cap ring consisting of EXOSC1, EXOSC2 and EXOSC3. The RNA exosome complex associates with cofactors C1D/RRP47, MPHOSPH6/MPP6 and MTREX/MTR4.

It is found in the cytoplasm. Its subcellular location is the nucleus. The protein resides in the nucleolus. Its function is as follows. Non-catalytic component of the RNA exosome complex which has 3'-&gt;5' exoribonuclease activity and participates in a multitude of cellular RNA processing and degradation events. In the nucleus, the RNA exosome complex is involved in proper maturation of stable RNA species such as rRNA, snRNA and snoRNA, in the elimination of RNA processing by-products and non-coding 'pervasive' transcripts, such as antisense RNA species and promoter-upstream transcripts (PROMPTs), and of mRNAs with processing defects, thereby limiting or excluding their export to the cytoplasm. The RNA exosome may be involved in Ig class switch recombination (CSR) and/or Ig variable region somatic hypermutation (SHM) by targeting AICDA deamination activity to transcribed dsDNA substrates. In the cytoplasm, the RNA exosome complex is involved in general mRNA turnover and specifically degrades inherently unstable mRNAs containing AU-rich elements (AREs) within their 3' untranslated regions, and in RNA surveillance pathways, preventing translation of aberrant mRNAs. It seems to be involved in degradation of histone mRNA. The catalytic inactive RNA exosome core complex of 9 subunits (Exo-9) is proposed to play a pivotal role in the binding and presentation of RNA for ribonucleolysis, and to serve as a scaffold for the association with catalytic subunits and accessory proteins or complexes. EXOSC8 binds to ARE-containing RNAs. The sequence is that of Exosome complex component RRP43 (Exosc8) from Mus musculus (Mouse).